Here is a 320-residue protein sequence, read N- to C-terminus: NAD kinase (320 aa).

Aspartate 96 serves as the catalytic Proton acceptor. NAD(+)-binding positions include 96 to 97 (DG), arginine 101, 170 to 171 (NE), aspartate 200, and 211 to 216 (TAYAFS).

This sequence belongs to the NAD kinase family. It depends on a divalent metal cation as a cofactor.

It localises to the cytoplasm. The catalysed reaction is NAD(+) + ATP = ADP + NADP(+) + H(+). In terms of biological role, involved in the regulation of the intracellular balance of NAD and NADP, and is a key enzyme in the biosynthesis of NADP. Catalyzes specifically the phosphorylation on 2'-hydroxyl of the adenosine moiety of NAD to yield NADP. The polypeptide is NAD kinase (Rhodococcus jostii (strain RHA1)).